Reading from the N-terminus, the 66-residue chain is uncharacterized protein (66 aa).

This is an uncharacterized protein from Enterobacteria phage T4 (Bacteriophage T4).